We begin with the raw amino-acid sequence, 213 residues long: Adenylate kinase (213 aa).

14–19 contributes to the ATP binding site; that stretch reads GSGKGT. Positions 34–63 are NMP; the sequence is SSGELFRSAIDSASPLGIKAAEYINQGLLV. AMP-binding positions include serine 35, arginine 40, 61 to 63, 89 to 92, and glutamine 96; these read LLV and GFPR. Residues 129–162 are LID; that stretch reads SRFICPSCKHVYNQNQGLSECPTCQMKLVRRSDD. ATP is bound at residue arginine 130. Zn(2+)-binding residues include cysteine 133 and cysteine 136. ATP is bound at residue 139–140; that stretch reads VY. Cysteine 149 and cysteine 152 together coordinate Zn(2+). AMP-binding residues include arginine 159 and arginine 170. Alanine 198 is a binding site for ATP.

Belongs to the adenylate kinase family. In terms of assembly, monomer.

It is found in the cytoplasm. It catalyses the reaction AMP + ATP = 2 ADP. It participates in purine metabolism; AMP biosynthesis via salvage pathway; AMP from ADP: step 1/1. Functionally, catalyzes the reversible transfer of the terminal phosphate group between ATP and AMP. Plays an important role in cellular energy homeostasis and in adenine nucleotide metabolism. This chain is Adenylate kinase, found in Chlamydia abortus (strain DSM 27085 / S26/3) (Chlamydophila abortus).